Here is a 203-residue protein sequence, read N- to C-terminus: Histidine biosynthesis bifunctional protein HisIE (203 aa).

The tract at residues 1 to 108 (MELDFDKMNG…GEKNEEPVMF (108 aa)) is phosphoribosyl-AMP cyclohydrolase. A phosphoribosyl-ATP pyrophosphohydrolase region spans residues 109 to 203 (LKALQDFIDK…ERHSSTWKKH (95 aa)).

In the N-terminal section; belongs to the PRA-CH family. This sequence in the C-terminal section; belongs to the PRA-PH family.

Its subcellular location is the cytoplasm. It catalyses the reaction 1-(5-phospho-beta-D-ribosyl)-ATP + H2O = 1-(5-phospho-beta-D-ribosyl)-5'-AMP + diphosphate + H(+). The enzyme catalyses 1-(5-phospho-beta-D-ribosyl)-5'-AMP + H2O = 1-(5-phospho-beta-D-ribosyl)-5-[(5-phospho-beta-D-ribosylamino)methylideneamino]imidazole-4-carboxamide. The protein operates within amino-acid biosynthesis; L-histidine biosynthesis; L-histidine from 5-phospho-alpha-D-ribose 1-diphosphate: step 2/9. It functions in the pathway amino-acid biosynthesis; L-histidine biosynthesis; L-histidine from 5-phospho-alpha-D-ribose 1-diphosphate: step 3/9. This chain is Histidine biosynthesis bifunctional protein HisIE, found in Bacteroides thetaiotaomicron (strain ATCC 29148 / DSM 2079 / JCM 5827 / CCUG 10774 / NCTC 10582 / VPI-5482 / E50).